The following is a 606-amino-acid chain: Threonine--tRNA ligase (606 aa).

Positions 212-503 (DHRKLGVEMK…LIEHTAGELP (292 aa)) are catalytic. Zn(2+) is bound by residues Cys304, His355, and His480.

Belongs to the class-II aminoacyl-tRNA synthetase family. In terms of assembly, homodimer. The cofactor is Zn(2+).

The protein localises to the cytoplasm. The enzyme catalyses tRNA(Thr) + L-threonine + ATP = L-threonyl-tRNA(Thr) + AMP + diphosphate + H(+). Functionally, catalyzes the attachment of threonine to tRNA(Thr) in a two-step reaction: L-threonine is first activated by ATP to form Thr-AMP and then transferred to the acceptor end of tRNA(Thr). Also edits incorrectly charged L-seryl-tRNA(Thr). This is Threonine--tRNA ligase from Campylobacter curvus (strain 525.92).